We begin with the raw amino-acid sequence, 305 residues long: GTPase Era (305 aa).

Positions 11 to 181 (RSGFVSFVGR…IKVMTDLLPE (171 aa)) constitute an Era-type G domain. The tract at residues 19–26 (GRPNTGKS) is G1. Position 19–26 (19–26 (GRPNTGKS)) interacts with GTP. Positions 45 to 49 (ETTRH) are G2. The interval 66-69 (DTPG) is G3. Residues 66-70 (DTPGL) and 130-133 (TKAD) each bind GTP. Residues 130 to 133 (TKAD) form a G4 region. The interval 160 to 162 (VSS) is G5. In terms of domain architecture, KH type-2 spans 212–291 (LKNELPHSVA…FLDLRIKVLK (80 aa)).

It belongs to the TRAFAC class TrmE-Era-EngA-EngB-Septin-like GTPase superfamily. Era GTPase family. In terms of assembly, monomer.

Its subcellular location is the cytoplasm. The protein resides in the cell membrane. An essential GTPase that binds both GDP and GTP, with rapid nucleotide exchange. Plays a role in 16S rRNA processing and 30S ribosomal subunit biogenesis and possibly also in cell cycle regulation and energy metabolism. This is GTPase Era from Corynebacterium glutamicum (strain ATCC 13032 / DSM 20300 / JCM 1318 / BCRC 11384 / CCUG 27702 / LMG 3730 / NBRC 12168 / NCIMB 10025 / NRRL B-2784 / 534).